Here is a 327-residue protein sequence, read N- to C-terminus: MDVTHTPVLTERVIQLLDPALRRPGAVVVDATVGLGGHSHALLEAFPQVRLIGLDRDTTALEHSRRRLTGLGDRVDLEHAVYDQLPDVLDRLGVPSVDGVLFDLGVSSMQLDLDERGFAYSRDAPLDMRMDQERGPTAADVLNNYDVDALTRVLREYGEERFARRIARAVVTQRQAAPFTTSARLVDLVRDSIPAAARRTGGNPAKRTFQALRIEVNSELEVLERAVPAAFDALAVAGRLVVLSYHSLEDRLVKRVLMPRSVPSVPPDMPVIPDDARPTLRWLTRGAEPASDTEIEQNARAGSVRLRAAERTAAEPGRAHNPTGGVR.

Residues Gly36–His38, Asp55, Leu89, Asp103, and Gln110 contribute to the S-adenosyl-L-methionine site. The disordered stretch occupies residues Gly286–Arg327.

It belongs to the methyltransferase superfamily. RsmH family.

Its subcellular location is the cytoplasm. It carries out the reaction cytidine(1402) in 16S rRNA + S-adenosyl-L-methionine = N(4)-methylcytidine(1402) in 16S rRNA + S-adenosyl-L-homocysteine + H(+). Specifically methylates the N4 position of cytidine in position 1402 (C1402) of 16S rRNA. This chain is Ribosomal RNA small subunit methyltransferase H, found in Parafrankia sp. (strain EAN1pec).